The primary structure comprises 205 residues: Molybdenum cofactor guanylyltransferase (205 aa).

GTP contacts are provided by residues 14-16 (LAG), lysine 27, aspartate 77, and aspartate 107. Aspartate 107 contributes to the Mg(2+) binding site.

This sequence belongs to the MobA family. As to quaternary structure, monomer. The cofactor is Mg(2+).

The protein localises to the cytoplasm. The catalysed reaction is Mo-molybdopterin + GTP + H(+) = Mo-molybdopterin guanine dinucleotide + diphosphate. Functionally, transfers a GMP moiety from GTP to Mo-molybdopterin (Mo-MPT) cofactor (Moco or molybdenum cofactor) to form Mo-molybdopterin guanine dinucleotide (Mo-MGD) cofactor. The chain is Molybdenum cofactor guanylyltransferase from Burkholderia orbicola (strain MC0-3).